A 688-amino-acid chain; its full sequence is Thyroid hormone-induced protein B (688 aa).

An N-terminal signal peptide occupies residues 1–20 (MMLSHWVLLLSLGAVWLAEG). MAM domains lie at 26–169 (GSCT…GYCI), 170–330 (ECDF…SCSG), 341–500 (AGCD…SCKI), and 509–669 (GKCT…PCND). N-linked (GlcNAc...) asparagine glycosylation is found at Asn32 and Asn135. N-linked (GlcNAc...) asparagine glycosylation is found at Asn358 and Asn668.

The protein localises to the membrane. It localises to the secreted. The protein resides in the extracellular space. This chain is Thyroid hormone-induced protein B, found in Xenopus laevis (African clawed frog).